Reading from the N-terminus, the 257-residue chain is Probable transcriptional regulatory protein SRU_2667 (257 aa).

Positions 1 to 15 (MAGHTRKWAKVKRKK) are enriched in basic residues. The segment at 1–25 (MAGHTRKWAKVKRKKQKDDRRKSKV) is disordered.

Belongs to the TACO1 family.

The protein resides in the cytoplasm. The chain is Probable transcriptional regulatory protein SRU_2667 from Salinibacter ruber (strain DSM 13855 / M31).